Reading from the N-terminus, the 180-residue chain is Adenine phosphoribosyltransferase (180 aa).

At A2 the chain carries N-acetylalanine. Residues S4, S15, and S30 each carry the phosphoserine modification. Y60 carries the post-translational modification Phosphotyrosine. At S66 the chain carries Phosphoserine. K114 carries the post-translational modification N6-acetyllysine. Position 135 is a phosphothreonine (T135).

This sequence belongs to the purine/pyrimidine phosphoribosyltransferase family. Homodimer.

It is found in the cytoplasm. It carries out the reaction AMP + diphosphate = 5-phospho-alpha-D-ribose 1-diphosphate + adenine. The protein operates within purine metabolism; AMP biosynthesis via salvage pathway; AMP from adenine: step 1/1. Its function is as follows. Catalyzes a salvage reaction resulting in the formation of AMP, that is energically less costly than de novo synthesis. This is Adenine phosphoribosyltransferase from Cricetulus griseus (Chinese hamster).